The chain runs to 112 residues: Protein 4.2 (112 aa).

The segment at 64–93 (KPDGLNHQVTQGKKSHTQSQQTGPTTLTSD) is disordered. Positions 70 to 92 (HQVTQGKKSHTQSQQTGPTTLTS) are enriched in polar residues.

The sequence is that of Protein 4.2 from Escherichia phage T7 (Bacteriophage T7).